The chain runs to 811 residues: U-box domain-containing protein 43 (811 aa).

A U-box domain is found at 24–103; sequence NIYEAFICPL…EEWRARNDAL (80 aa). ARM repeat units follow at residues 136 to 175, 178 to 217, 220 to 261, 263 to 302, 303 to 342, 344 to 388, 399 to 438, 444 to 484, and 489 to 528; these read RKIR…VVVE, EESK…ELSK, ALCE…NLER, EENV…VLAL, NNDV…NISS, EGSA…NIVN, GPHH…GLTS, INVV…NISP, and ELAN…LLAE.

It carries out the reaction S-ubiquitinyl-[E2 ubiquitin-conjugating enzyme]-L-cysteine + [acceptor protein]-L-lysine = [E2 ubiquitin-conjugating enzyme]-L-cysteine + N(6)-ubiquitinyl-[acceptor protein]-L-lysine.. Its pathway is protein modification; protein ubiquitination. In terms of biological role, functions as an E3 ubiquitin ligase. This Arabidopsis thaliana (Mouse-ear cress) protein is U-box domain-containing protein 43 (PUB43).